Consider the following 315-residue polypeptide: Secreted mono- and diacylglycerol lipase LIP2 (315 aa).

A signal peptide spans 1–21 (MACFRVILYLSVIFFVQCVFA). Cys68 and Cys308 are oxidised to a cystine. N-linked (GlcNAc...) asparagine glycosylation is present at Asn74. The active-site Nucleophile is the Ser182. The active site involves Asp240. Asn265 carries an N-linked (GlcNAc...) asparagine glycan. The active site involves His292.

This sequence belongs to the AB hydrolase superfamily. Lipase family. Class 3 subfamily.

The protein resides in the secreted. The catalysed reaction is a monoacylglycerol + H2O = glycerol + a fatty acid + H(+). It catalyses the reaction a diacylglycerol + H2O = a monoacylglycerol + a fatty acid + H(+). Functionally, secreted lipase involved in Dandruff and seborrheic dermatitis (D/SD) probably via lipase-mediated breakdown of sebaceous lipids and release of irritating free fatty acids. Shows activity against monoglyceride and diglyceride substrates and generates free oleic acid from the substrates mono- and diolein. Able to cleave the oleic acid from both the 1 and the 2 position of the glycerol backbone as 1,2 isomers of diolein were converted into oleic acid and glycerol. Due to an absence of fatty acid synthase genes in Malassezia species, secretory lipases are essential for the yeast to generate free fatty acids from degradation of sebum and assimilate them as lipid sources for growth. Plays an essential role at the pathogen-host interface during disease progression. Also performs the reverse reaction to build diacylglycerols from monoacylglycerols. This is Secreted mono- and diacylglycerol lipase LIP2 from Malassezia restricta (strain ATCC 96810 / NBRC 103918 / CBS 7877) (Seborrheic dermatitis infection agent).